A 376-amino-acid polypeptide reads, in one-letter code: Small RNA 2'-O-methyltransferase (376 aa).

S-adenosyl-L-methionine contacts are provided by Thr-49, Asp-67, and Ser-103. Glu-121, Glu-124, His-125, and His-171 together coordinate Mg(2+).

Belongs to the methyltransferase superfamily. HEN1 family. Mg(2+) is required as a cofactor.

It localises to the cytoplasm. The catalysed reaction is small RNA 3'-end nucleotide + S-adenosyl-L-methionine = small RNA 3'-end 2'-O-methylnucleotide + S-adenosyl-L-homocysteine + H(+). In terms of biological role, methyltransferase that adds a 2'-O-methyl group at the 3'-end of piRNAs, a class of 24 to 30 nucleotide RNAs that are generated by a Dicer-independent mechanism and are primarily derived from transposons and other repeated sequence elements. This probably protects the 3'-end of piRNAs from uridylation activity and subsequent degradation. Stabilization of piRNAs is essential for gametogenesis. The protein is Small RNA 2'-O-methyltransferase (HENMT1) of Gallus gallus (Chicken).